Reading from the N-terminus, the 216-residue chain is Small ribosomal subunit protein uS3c (216 aa).

A KH type-2 domain is found at 39–109; the sequence is IRSYINRELE…SIRINVIELT (71 aa).

Belongs to the universal ribosomal protein uS3 family. In terms of assembly, part of the 30S ribosomal subunit.

It is found in the plastid. Its subcellular location is the chloroplast. This is Small ribosomal subunit protein uS3c (rps3) from Guillardia theta (Cryptophyte).